The chain runs to 400 residues: Probable peptidoglycan D,D-transpeptidase PenA (400 aa).

Residues Asn-1–Glu-21 are disordered. The Acyl-ester intermediate role is filled by Ser-128.

Belongs to the transpeptidase family. FtsI subfamily.

The protein localises to the cell inner membrane. The catalysed reaction is Preferential cleavage: (Ac)2-L-Lys-D-Ala-|-D-Ala. Also transpeptidation of peptidyl-alanyl moieties that are N-acyl substituents of D-alanine.. Its pathway is cell wall biogenesis; peptidoglycan biosynthesis. Functionally, catalyzes cross-linking of the peptidoglycan cell wall at the division septum. The sequence is that of Probable peptidoglycan D,D-transpeptidase PenA from Neisseria flavescens.